Consider the following 393-residue polypeptide: Fractalkine (393 aa).

The N-terminal stretch at 1–24 (MAPSQLAWLLRLAAFFHLCTLLAG) is a signal peptide. Residues 25 to 100 (QHLGMTKCNI…HQTAALTRNG (76 aa)) form a chemokine and involved in interaction with ITGAV:ITGB3 and ITGA4:ITGB1 region. Topologically, residues 25 to 337 (QHLGMTKCNI…PDSQAATRRQ (313 aa)) are extracellular. Disulfide bonds link cysteine 32-cysteine 58 and cysteine 36-cysteine 74. Asparagine 33 carries N-linked (GlcNAc...) asparagine glycosylation. The tract at residues 101–337 (GKFEKRVDNV…PDSQAATRRQ (237 aa)) is mucin-like stalk. Disordered regions lie at residues 114–184 (ITSA…PQST) and 213–303 (EKAT…SGSQ). Composition is skewed to polar residues over residues 153-172 (GTSQEPPAAVTGSSPSTSKA) and 223-240 (ALSTQASTTSSPKQNVGS). A helical membrane pass occupies residues 338–358 (AVGLLAFLGLLFCLGVAMFAY). At 359–393 (QSLQGCPRKMAGEMVEGLRYVPRSCGSNSYVLVPV) the chain is on the cytoplasmic side.

Belongs to the intercrine delta family. In terms of assembly, monomer. Forms a ternary complex with CX3CR1 and ITGAV:ITGB3 or ITGA4:ITGB1. Post-translationally, a soluble short form may be released by proteolytic cleavage from the long membrane-anchored form. In terms of tissue distribution, highest levels in brain (neurons). Significant levels in kidney, heart, lung and adrenal gland.

The protein resides in the cell membrane. Its subcellular location is the secreted. Chemokine that acts as a ligand for both CX3CR1 and integrins ITGAV:ITGB3 and ITGA4:ITGB1. The CX3CR1-CX3CL1 signaling exerts distinct functions in different tissue compartments, such as immune response, inflammation, cell adhesion and chemotaxis. Regulates leukocyte adhesion and migration processes at the endothelium. Can activate integrins in both a CX3CR1-dependent and CX3CR1-independent manner. In the presence of CX3CR1, activates integrins by binding to the classical ligand-binding site (site 1) in integrins. In the absence of CX3CR1, binds to a second site (site 2) in integrins which is distinct from site 1 and enhances the binding of other integrin ligands to site 1. Functionally, the soluble form is chemotactic for T-cells and monocytes, but not for neutrophils. Its function is as follows. The membrane-bound form promotes adhesion of those leukocytes to endothelial cells. This Rattus norvegicus (Rat) protein is Fractalkine (Cx3cl1).